Consider the following 110-residue polypeptide: MNLQKISKKIDFKKGAGLIPTIIQDFCSGEVLMLAYMNKESLEKTIETNTTWFWSRSREELWNKGATSGHFQYVKSIHIDCDGDTLLIKVEQLGPACHTGNRSCFYTTLI.

D80 lines the Mg(2+) pocket. C81 serves as a coordination point for Zn(2+). Mg(2+) contacts are provided by D82 and D84. Positions 97 and 104 each coordinate Zn(2+).

The protein belongs to the PRA-CH family. Homodimer. Requires Mg(2+) as cofactor. Zn(2+) is required as a cofactor.

The protein localises to the cytoplasm. It catalyses the reaction 1-(5-phospho-beta-D-ribosyl)-5'-AMP + H2O = 1-(5-phospho-beta-D-ribosyl)-5-[(5-phospho-beta-D-ribosylamino)methylideneamino]imidazole-4-carboxamide. The protein operates within amino-acid biosynthesis; L-histidine biosynthesis; L-histidine from 5-phospho-alpha-D-ribose 1-diphosphate: step 3/9. Its function is as follows. Catalyzes the hydrolysis of the adenine ring of phosphoribosyl-AMP. The chain is Phosphoribosyl-AMP cyclohydrolase from Clostridium botulinum (strain ATCC 19397 / Type A).